We begin with the raw amino-acid sequence, 365 residues long: Cobalt-precorrin-5B C(1)-methyltransferase (365 aa).

This sequence belongs to the CbiD family.

The enzyme catalyses Co-precorrin-5B + S-adenosyl-L-methionine = Co-precorrin-6A + S-adenosyl-L-homocysteine. It functions in the pathway cofactor biosynthesis; adenosylcobalamin biosynthesis; cob(II)yrinate a,c-diamide from sirohydrochlorin (anaerobic route): step 6/10. Functionally, catalyzes the methylation of C-1 in cobalt-precorrin-5B to form cobalt-precorrin-6A. This Paraburkholderia phytofirmans (strain DSM 17436 / LMG 22146 / PsJN) (Burkholderia phytofirmans) protein is Cobalt-precorrin-5B C(1)-methyltransferase.